Consider the following 436-residue polypeptide: Protein translocase subunit SecY (436 aa).

10 consecutive transmembrane segments (helical) span residues 19-39 (ILFTIFIILVFRIGTTITVPG), 68-88 (FSVFALGVSPYITASIVVQLL), 116-136 (YISLALAFVQSIGITAGFNAL), 151-171 (LFIGAVLTTGSMIVVWLGEQI), 179-199 (GVSMIIFAGIVASIPEMVKGI), 216-236 (IIFVACLIVAVLLIVYFTTYV), 269-289 (VIPVIFASSITAAPAAVLQFL), 313-333 (GIAMYALLIILFTFFYTFVQI), 372-392 (VGSLFLGFISIIPIIAKDLFG), and 395-415 (DTVALGGTSLLIIIATGIEGM).

It belongs to the SecY/SEC61-alpha family. In terms of assembly, component of the Sec protein translocase complex. Heterotrimer consisting of SecY, SecE and SecG subunits. The heterotrimers can form oligomers, although 1 heterotrimer is thought to be able to translocate proteins. Interacts with the ribosome. Interacts with SecDF, and other proteins may be involved. Interacts with SecA.

Its subcellular location is the cell membrane. Functionally, the central subunit of the protein translocation channel SecYEG. Consists of two halves formed by TMs 1-5 and 6-10. These two domains form a lateral gate at the front which open onto the bilayer between TMs 2 and 7, and are clamped together by SecE at the back. The channel is closed by both a pore ring composed of hydrophobic SecY resides and a short helix (helix 2A) on the extracellular side of the membrane which forms a plug. The plug probably moves laterally to allow the channel to open. The ring and the pore may move independently. The chain is Protein translocase subunit SecY from Streptococcus gordonii (strain Challis / ATCC 35105 / BCRC 15272 / CH1 / DL1 / V288).